An 801-amino-acid polypeptide reads, in one-letter code: Cadherin-20 (801 aa).

Positions 1–34 are cleaved as a signal peptide; sequence MWTTGRMSNAKSWLGLGTSLYFWALMDLTATVLS. The propeptide occupies 35 to 59; the sequence is STPMPEVELETLFSGRSQSHQRSKR. Topologically, residues 60–619 are extracellular; sequence SWVWNQFFVL…AYLLPVSLSR (560 aa). Cadherin domains lie at 61-165, 166-274, 275-389, 390-494, and 494-610; these read WVWN…EPKF, LDGP…PPRF, PQKH…PPVF, EPGF…APEF, and FPRF…SPEA. N-linked (GlcNAc...) asparagine glycosylation occurs at Asn-261. Residues Asn-420, Asn-461, and Asn-542 are each glycosylated (N-linked (GlcNAc...) asparagine). Residues 620 to 640 form a helical membrane-spanning segment; it reads GALIAILACIFVLLVLVLLIL. The Cytoplasmic portion of the chain corresponds to 641 to 801; it reads SMRRHRKQPY…GASEGPAPLW (161 aa).

In terms of tissue distribution, expressed in brain. Highest level of expression in the retina. In embryo it is synthesized by the forebrain, anterior neural ridge, developing visual system, primitive external granular layer of the cerebellum and a subset of neural crest cells likely to develop into melanoblasts.

Its subcellular location is the cell membrane. Cadherins are calcium-dependent cell adhesion proteins. They preferentially interact with themselves in a homophilic manner in connecting cells; cadherins may thus contribute to the sorting of heterogeneous cell types. The sequence is that of Cadherin-20 (Cdh20) from Mus musculus (Mouse).